Reading from the N-terminus, the 461-residue chain is Lysosomal proton-coupled steroid conjugate and bile acid symporter SLC46A3 (461 aa).

The first 25 residues, 1–25, serve as a signal peptide directing secretion; it reads MKILFVEPAIFLSAFAMTLTGPLTT. Residues 26-73 are Extracellular-facing; sequence QYVYRRIWEETGNYTFSSDSNISECEKNKSSPIFAFQEEVQKKVSRFN. Asn-38, Asn-46, and Asn-53 each carry an N-linked (GlcNAc...) asparagine glycan. A helical transmembrane segment spans residues 74 to 94; sequence LQMDISGLIPGLVSTFILLSI. Over 95-101 the chain is Cytoplasmic; sequence SDHYGRK. Residues 102 to 124 traverse the membrane as a helical segment; sequence FPMILSSVGALATSVWLCLLCYF. Over 125-133 the chain is Extracellular; the sequence is AFPFQLLIA. Residues 134 to 156 form a helical membrane-spanning segment; sequence STFIGAFCGNYTTFWGACFAYIV. Topologically, residues 157–170 are cytoplasmic; sequence DQCKEHKQKTIRIA. A helical transmembrane segment spans residues 171-191; it reads IIDFLLGLVTGLTGLSSGYFI. Over 192–197 the chain is Extracellular; the sequence is RELGFE. The chain crosses the membrane as a helical span at residues 198 to 218; it reads WSFLIIAVSLAVNLIYILFFL. Over 219–261 the chain is Cytoplasmic; sequence GDPVKECSSQNVTMSCSEGFKNLFYRTYMLFKNASGKRRFLLC. The helical transmembrane segment at 262–282 threads the bilayer; the sequence is LLLFTVITYFFVVIGIAPIFI. At 283 to 294 the chain is on the extracellular side; it reads LYELDSPLCWNE. Residues 295–315 form a helical membrane-spanning segment; that stretch reads VFIGYGSALGSASFLTSFLGI. Residues 316-324 lie on the Cytoplasmic side of the membrane; that stretch reads WLFSYCMED. The chain crosses the membrane as a helical span at residues 325–345; the sequence is IHMAFIGIFTTMTGMAMTAFA. At 346–347 the chain is on the extracellular side; the sequence is ST. The chain crosses the membrane as a helical span at residues 348–368; it reads TLMMFLARVPFLFTIVPFSVL. Residues 369–382 are Cytoplasmic-facing; sequence RSMLSKVVRSTEQG. The chain crosses the membrane as a helical span at residues 383–403; that stretch reads TLFACIAFLETLGGVTAVSTF. Residues 404-415 lie on the Extracellular side of the membrane; sequence NGIYSATVAWYP. Residues 416–436 traverse the membrane as a helical segment; the sequence is GFTFLLSAGLLLLPAISLCVV. The Cytoplasmic portion of the chain corresponds to 437–461; the sequence is KCTSWNEGSYELLIQEESSEDASDR. A Tyrosine-based lysosomal-sorting motif motif is present at residues 446–449; the sequence is YELL.

It belongs to the major facilitator superfamily. SLC46A family.

The protein localises to the lysosome membrane. It catalyses the reaction estrone 3-sulfate(out) + n H(+)(out) = estrone 3-sulfate(in) + n H(+)(in). It carries out the reaction 25-hydroxyvitamin D3 sulfate(out) + n H(+)(out) = 25-hydroxyvitamin D3 sulfate(in) + n H(+)(in). The catalysed reaction is cholate(out) + n H(+)(out) = cholate(in) + n H(+)(in). The enzyme catalyses glycocholate(out) + n H(+)(out) = glycocholate(in) + n H(+)(in). It catalyses the reaction taurocholate(out) + n H(+)(out) = taurocholate(in) + n H(+)(in). It carries out the reaction dehydroepiandrosterone 3-sulfate(out) + n H(+)(out) = dehydroepiandrosterone 3-sulfate(in) + n H(+)(in). The catalysed reaction is N-acetyl-D-muramoyl-L-alanyl-D-isoglutamine(out) + n H(+)(out) = N-acetyl-D-muramoyl-L-alanyl-D-isoglutamine(in) + n H(+)(in). The enzyme catalyses 2',3'-cGAMP(out) + n H(+)(out) = 2',3'-cGAMP(in) + n H(+)(in). In terms of biological role, lysosomal proton-coupled steroid conjugate and bile acid transporter. Preferentially recognizes lipophilic steroid conjugates or bile acis as endogenous substrates and seems to mediate escape from lysosomes to the cytoplasm. Modulates hepatic cytosolic copper homeostasis, maybe acting as a lysosomal copper transporter and sequestering copper ions in the lysosome. Transports catabolites of non-cleavable antibody-drug conjugates from the lysosome to the cytoplasm. Delivers pathogen-associated molecular patterns to cytosolic pattern recognition receptors as part of the innate immune response to microbes. Selectively transports bacterial muramyl dipeptide (MDP) into the cytosol for recognition by NOD2, triggering inflammatory responses. Likely acts as a redundant importer of cyclic GMP-AMP dinucleotides (cGAMPs) in monocyte and macrophage cell lineages. The transport mechanism, its electrogenicity and stoichiometry remain to be elucidated. The sequence is that of Lysosomal proton-coupled steroid conjugate and bile acid symporter SLC46A3 from Homo sapiens (Human).